The following is a 206-amino-acid chain: uncharacterized protein (206 aa).

Positions 29-169 (YWHSTFHCWV…DGVFAEGFIV (141 aa)) constitute a Nudix hydrolase domain. Positions 69-90 (AGHIKSGESIEDGVRELKEELG) match the Nudix box motif. Residues Glu84 and Glu88 each coordinate Mg(2+).

The protein belongs to the Nudix hydrolase family. The cofactor is Mg(2+).

This is an uncharacterized protein from Clostridium acetobutylicum (strain ATCC 824 / DSM 792 / JCM 1419 / IAM 19013 / LMG 5710 / NBRC 13948 / NRRL B-527 / VKM B-1787 / 2291 / W).